The primary structure comprises 453 residues: Ribulose bisphosphate carboxylase large chain (453 aa).

Positions 1–2 are excised as a propeptide; that stretch reads MS. Pro-3 carries the post-translational modification N-acetylproline. An N6,N6,N6-trimethyllysine modification is found at Lys-14. Substrate-binding residues include Asn-123 and Thr-173. The Proton acceptor role is filled by Lys-175. Lys-177 is a binding site for substrate. Mg(2+) is bound by residues Lys-201, Asp-203, and Glu-204. Residue Lys-201 is modified to N6-carboxylysine. His-294 (proton acceptor) is an active-site residue. 3 residues coordinate substrate: Arg-295, His-327, and Ser-379.

This sequence belongs to the RuBisCO large chain family. Type I subfamily. As to quaternary structure, heterohexadecamer of 8 large chains and 8 small chains; disulfide-linked. The disulfide link is formed within the large subunit homodimers. It depends on Mg(2+) as a cofactor. Post-translationally, the disulfide bond which can form in the large chain dimeric partners within the hexadecamer appears to be associated with oxidative stress and protein turnover.

The protein localises to the plastid. It is found in the chloroplast. The catalysed reaction is 2 (2R)-3-phosphoglycerate + 2 H(+) = D-ribulose 1,5-bisphosphate + CO2 + H2O. The enzyme catalyses D-ribulose 1,5-bisphosphate + O2 = 2-phosphoglycolate + (2R)-3-phosphoglycerate + 2 H(+). Its function is as follows. RuBisCO catalyzes two reactions: the carboxylation of D-ribulose 1,5-bisphosphate, the primary event in carbon dioxide fixation, as well as the oxidative fragmentation of the pentose substrate in the photorespiration process. Both reactions occur simultaneously and in competition at the same active site. The polypeptide is Ribulose bisphosphate carboxylase large chain (Rubia tinctorum (Madder)).